Consider the following 417-residue polypeptide: Serine hydroxymethyltransferase (417 aa).

Residues Leu121 and 125-127 (GHL) each bind (6S)-5,6,7,8-tetrahydrofolate. N6-(pyridoxal phosphate)lysine is present on Lys230. 355 to 357 (SPF) is a (6S)-5,6,7,8-tetrahydrofolate binding site.

It belongs to the SHMT family. Homodimer. Requires pyridoxal 5'-phosphate as cofactor.

It is found in the cytoplasm. It catalyses the reaction (6R)-5,10-methylene-5,6,7,8-tetrahydrofolate + glycine + H2O = (6S)-5,6,7,8-tetrahydrofolate + L-serine. The protein operates within one-carbon metabolism; tetrahydrofolate interconversion. It participates in amino-acid biosynthesis; glycine biosynthesis; glycine from L-serine: step 1/1. Functionally, catalyzes the reversible interconversion of serine and glycine with tetrahydrofolate (THF) serving as the one-carbon carrier. This reaction serves as the major source of one-carbon groups required for the biosynthesis of purines, thymidylate, methionine, and other important biomolecules. Also exhibits THF-independent aldolase activity toward beta-hydroxyamino acids, producing glycine and aldehydes, via a retro-aldol mechanism. The sequence is that of Serine hydroxymethyltransferase from Nitrosococcus oceani (strain ATCC 19707 / BCRC 17464 / JCM 30415 / NCIMB 11848 / C-107).